The sequence spans 146 residues: Hemoglobin subunit beta (146 aa).

Val1 carries the post-translational modification N-acetylvaline. In terms of domain architecture, Globin spans 2 to 146 (HLTAEEKSAV…VANALAHKYH (145 aa)). Ser44 is modified (phosphoserine). Lys59 carries the post-translational modification N6-acetyllysine. His63 is a heme b binding site. Lys82 is modified (N6-acetyllysine). His92 contributes to the heme b binding site. Residue Cys93 is modified to S-nitrosocysteine. At Lys144 the chain carries N6-acetyllysine.

It belongs to the globin family. Heterotetramer of two alpha chains and two beta chains. As to expression, red blood cells.

Its function is as follows. Involved in oxygen transport from the lung to the various peripheral tissues. This Tamias merriami (Merriam's chipmunk) protein is Hemoglobin subunit beta.